Consider the following 316-residue polypeptide: 4-hydroxy-3-methylbut-2-enyl diphosphate reductase (316 aa).

Cys-12 provides a ligand contact to [4Fe-4S] cluster. 2 residues coordinate (2E)-4-hydroxy-3-methylbut-2-enyl diphosphate: His-41 and His-74. Residues His-41 and His-74 each coordinate dimethylallyl diphosphate. Residues His-41 and His-74 each coordinate isopentenyl diphosphate. Cys-96 serves as a coordination point for [4Fe-4S] cluster. His-124 lines the (2E)-4-hydroxy-3-methylbut-2-enyl diphosphate pocket. Residue His-124 coordinates dimethylallyl diphosphate. His-124 contributes to the isopentenyl diphosphate binding site. The Proton donor role is filled by Glu-126. Thr-169 lines the (2E)-4-hydroxy-3-methylbut-2-enyl diphosphate pocket. Cys-199 contributes to the [4Fe-4S] cluster binding site. The (2E)-4-hydroxy-3-methylbut-2-enyl diphosphate site is built by Ser-227, Ser-228, Asn-229, and Ser-271. Residues Ser-227, Ser-228, Asn-229, and Ser-271 each contribute to the dimethylallyl diphosphate site. The isopentenyl diphosphate site is built by Ser-227, Ser-228, Asn-229, and Ser-271.

This sequence belongs to the IspH family. The cofactor is [4Fe-4S] cluster.

It catalyses the reaction isopentenyl diphosphate + 2 oxidized [2Fe-2S]-[ferredoxin] + H2O = (2E)-4-hydroxy-3-methylbut-2-enyl diphosphate + 2 reduced [2Fe-2S]-[ferredoxin] + 2 H(+). It carries out the reaction dimethylallyl diphosphate + 2 oxidized [2Fe-2S]-[ferredoxin] + H2O = (2E)-4-hydroxy-3-methylbut-2-enyl diphosphate + 2 reduced [2Fe-2S]-[ferredoxin] + 2 H(+). It participates in isoprenoid biosynthesis; dimethylallyl diphosphate biosynthesis; dimethylallyl diphosphate from (2E)-4-hydroxy-3-methylbutenyl diphosphate: step 1/1. The protein operates within isoprenoid biosynthesis; isopentenyl diphosphate biosynthesis via DXP pathway; isopentenyl diphosphate from 1-deoxy-D-xylulose 5-phosphate: step 6/6. Its function is as follows. Catalyzes the conversion of 1-hydroxy-2-methyl-2-(E)-butenyl 4-diphosphate (HMBPP) into a mixture of isopentenyl diphosphate (IPP) and dimethylallyl diphosphate (DMAPP). Acts in the terminal step of the DOXP/MEP pathway for isoprenoid precursor biosynthesis. This Stenotrophomonas maltophilia (strain R551-3) protein is 4-hydroxy-3-methylbut-2-enyl diphosphate reductase.